Here is a 172-residue protein sequence, read N- to C-terminus: Diphosphoinositol polyphosphate phosphohydrolase 1 (172 aa).

Met1 is modified (N-acetylmethionine). Residues Arg10, 18-20, and 39-41 each bind substrate; these read KKR and SSR. Residues 17-144 form the Nudix hydrolase domain; that stretch reads YKKRAACLCF…VQASYFETLR (128 aa). The Mg(2+) site is built by Gly50 and Glu66. The short motif at 51–72 is the Nudix box element; sequence GGMEPEEEPGTAAVREVCEEAG. Residue Glu69 is the Proton acceptor of the active site. Glu70 is a Mg(2+) binding site. Residues 89-91, Arg115, and Lys133 contribute to the substrate site; that span reads RKH.

This sequence belongs to the Nudix hydrolase family. DIPP subfamily. In terms of assembly, monomer. The cofactor is Mg(2+). It depends on Mn(2+) as a cofactor. Zn(2+) serves as cofactor.

It is found in the cytoplasm. The protein localises to the nucleus. The catalysed reaction is diphospho-myo-inositol polyphosphate + H2O = myo-inositol polyphosphate + phosphate.. The enzyme catalyses 5-diphospho-1D-myo-inositol 1,2,3,4,6-pentakisphosphate + H2O = 1D-myo-inositol hexakisphosphate + phosphate + H(+). It carries out the reaction 3,5-bis(diphospho)-1D-myo-inositol 1,2,4,6-tetrakisphosphate + H2O = 3-diphospho-1D-myo-inositol 1,2,4,5,6-pentakisphosphate + phosphate + 2 H(+). It catalyses the reaction [phosphate](n+1) + n H2O = (n+1) phosphate + n H(+). The catalysed reaction is P(1),P(5)-bis(5'-adenosyl) pentaphosphate + H2O = ADP + ATP + 2 H(+). The enzyme catalyses P(1),P(6)-bis(5'-adenosyl) hexaphosphate + H2O = 2 ATP + 2 H(+). It carries out the reaction P(1),P(4)-bis(5'-adenosyl) tetraphosphate + H2O = AMP + ATP + 2 H(+). It catalyses the reaction a 5'-end (N(7)-methyl 5'-triphosphoguanosine)-ribonucleoside in mRNA + H2O = N(7)-methyl-GMP + a 5'-end diphospho-ribonucleoside in mRNA + 2 H(+). The catalysed reaction is a 5'-end (N(7)-methyl 5'-triphosphoguanosine)-ribonucleoside in mRNA + H2O = N(7)-methyl-GDP + a 5'-end phospho-ribonucleoside in mRNA + 2 H(+). Functionally, cleaves a beta-phosphate from the diphosphate groups in PP-InsP5 (diphosphoinositol pentakisphosphate) and [PP]2-InsP4 (bisdiphosphoinositol tetrakisphosphate), suggesting that it may play a role in signal transduction. InsP6 (inositol hexakisphosphate) is not a substrate. Also able to catalyze the hydrolysis of dinucleoside oligophosphates, with diadenosine 5',5'''-P1,P6-hexaphosphate (Ap6A) and diadenosine 5',5'''- P1,P5-pentaphosphate (Ap5A) being the preferred substrates. The major reaction products are ADP and p4a from Ap6A and ADP and ATP from Ap5A. Also able to hydrolyze 5- phosphoribose 1-diphosphate. Acts as a decapping enzyme that can hydrolyze both monomethylated and unmethylated capped RNAs. Hydrolyzes monomethylated capped RNA after both the alpha- and beta-phosphates generating m7GMP + ppRNA and m7GDP + pRNA. Modulates the stability of a subset of mRNAs implicated in cell motility. Divalent cations zinc, magnesium and manganese determine its substrate specificity. Exhibits diphosphoinositol polyphosphate phosphohydrolase in the presence of magnesium ions, diadenosine hexaphosphate hydrolase activity in the presence of manganese ions and endopolyphosphatase activity in the presence of zinc ions. Plays an important role in limiting DNA damage and maintaining cell survival upon oxidative stress via its endopolyphosphatase activity. This chain is Diphosphoinositol polyphosphate phosphohydrolase 1, found in Bos taurus (Bovine).